The following is a 351-amino-acid chain: DNA polymerase IV (351 aa).

One can recognise a UmuC domain in the interval 4 to 185 (IIHVDMDCFF…LPLAKIPGVG (182 aa)). Mg(2+)-binding residues include Asp-8 and Asp-103. Glu-104 is an active-site residue.

It belongs to the DNA polymerase type-Y family. As to quaternary structure, monomer. The cofactor is Mg(2+).

It is found in the cytoplasm. It catalyses the reaction DNA(n) + a 2'-deoxyribonucleoside 5'-triphosphate = DNA(n+1) + diphosphate. In terms of biological role, poorly processive, error-prone DNA polymerase involved in untargeted mutagenesis. Copies undamaged DNA at stalled replication forks, which arise in vivo from mismatched or misaligned primer ends. These misaligned primers can be extended by PolIV. Exhibits no 3'-5' exonuclease (proofreading) activity. May be involved in translesional synthesis, in conjunction with the beta clamp from PolIII. This is DNA polymerase IV from Escherichia coli O139:H28 (strain E24377A / ETEC).